Reading from the N-terminus, the 203-residue chain is Histidine biosynthesis bifunctional protein HisIE (203 aa).

The interval 1 to 114 (MLTEQQRREL…FGDTAHQWLF (114 aa)) is phosphoribosyl-AMP cyclohydrolase. The tract at residues 115–203 (LYQLEQLLAE…VIENLRKRHQ (89 aa)) is phosphoribosyl-ATP pyrophosphohydrolase.

This sequence in the N-terminal section; belongs to the PRA-CH family. It in the C-terminal section; belongs to the PRA-PH family.

The protein localises to the cytoplasm. The enzyme catalyses 1-(5-phospho-beta-D-ribosyl)-ATP + H2O = 1-(5-phospho-beta-D-ribosyl)-5'-AMP + diphosphate + H(+). It catalyses the reaction 1-(5-phospho-beta-D-ribosyl)-5'-AMP + H2O = 1-(5-phospho-beta-D-ribosyl)-5-[(5-phospho-beta-D-ribosylamino)methylideneamino]imidazole-4-carboxamide. The protein operates within amino-acid biosynthesis; L-histidine biosynthesis; L-histidine from 5-phospho-alpha-D-ribose 1-diphosphate: step 2/9. It functions in the pathway amino-acid biosynthesis; L-histidine biosynthesis; L-histidine from 5-phospho-alpha-D-ribose 1-diphosphate: step 3/9. This Escherichia coli (strain K12) protein is Histidine biosynthesis bifunctional protein HisIE (hisI).